The chain runs to 68 residues: Small ribosomal subunit protein bS21 (68 aa).

The disordered stretch occupies residues 39-68 (PPSVKRVRKKQESERRHRKERAMRRRMMEE). Over residues 54–68 (RHRKERAMRRRMMEE) the composition is skewed to basic residues.

It belongs to the bacterial ribosomal protein bS21 family.

The polypeptide is Small ribosomal subunit protein bS21 (Orientia tsutsugamushi (strain Ikeda) (Rickettsia tsutsugamushi)).